A 1404-amino-acid polypeptide reads, in one-letter code: DNA-directed RNA polymerase subunit beta' (1404 aa).

Residues cysteine 60, cysteine 62, cysteine 75, and cysteine 78 each contribute to the Zn(2+) site. Positions 449, 451, and 453 each coordinate Mg(2+). Zn(2+)-binding residues include cysteine 778, cysteine 852, cysteine 859, and cysteine 862. The tract at residues 1381 to 1404 (DRPLEEEEEEEIPQSIADDSDGDE) is disordered. A compositionally biased stretch (acidic residues) spans 1384 to 1404 (LEEEEEEEIPQSIADDSDGDE).

This sequence belongs to the RNA polymerase beta' chain family. In terms of assembly, the RNAP catalytic core consists of 2 alpha, 1 beta, 1 beta' and 1 omega subunit. When a sigma factor is associated with the core the holoenzyme is formed, which can initiate transcription. It depends on Mg(2+) as a cofactor. Zn(2+) serves as cofactor.

The catalysed reaction is RNA(n) + a ribonucleoside 5'-triphosphate = RNA(n+1) + diphosphate. DNA-dependent RNA polymerase catalyzes the transcription of DNA into RNA using the four ribonucleoside triphosphates as substrates. This chain is DNA-directed RNA polymerase subunit beta', found in Leptospira borgpetersenii serovar Hardjo-bovis (strain JB197).